The chain runs to 90 residues: Large ribosomal subunit protein uL16c (90 aa).

It belongs to the universal ribosomal protein uL16 family. Part of the 50S ribosomal subunit.

The protein localises to the plastid. It is found in the chloroplast. The polypeptide is Large ribosomal subunit protein uL16c (rpl16) (Oenothera ammophila (Evening primerose)).